The chain runs to 491 residues: G2/mitotic-specific cyclin-A (491 aa).

The segment at 1–21 is disordered; sequence MASFQIHQDMSNKENPGIKIP. The Cyclin N-terminal domain maps to 206–332; that stretch reads DILEYFRESE…ILKILSFDLC (127 aa).

The protein belongs to the cyclin family. Cyclin AB subfamily. In terms of assembly, component of the Frs-CycA-Cdk1 complex composed of CycA, Cdk1 and Z600. Interacts (via C-terminus) with Z600. Interacts with otu and (via C-terminus) with bam; the interaction stabilizes CycA by negatively regulating its ubiquitination. Post-translationally, ubiquitinated. Ubiquitination state is negatively regulated by a deubiquitinase complex made up of bam and otu.

Its function is as follows. Essential for the control of the cell cycle at the G2/M (mitosis) transition. Interacts with the Cdk1 and Cdk2 protein kinases to form MPF. G2/M cyclins accumulate steadily during G2 and are abruptly destroyed at mitosis. The protein is G2/mitotic-specific cyclin-A (CycA) of Drosophila melanogaster (Fruit fly).